A 622-amino-acid polypeptide reads, in one-letter code: Chaperone protein HscA homolog (622 aa).

It belongs to the heat shock protein 70 family.

Chaperone involved in the maturation of iron-sulfur cluster-containing proteins. Has a low intrinsic ATPase activity which is markedly stimulated by HscB. The chain is Chaperone protein HscA homolog from Burkholderia orbicola (strain MC0-3).